The chain runs to 64 residues: Large ribosomal subunit protein bL33 (64 aa).

Basic and acidic residues-rich tracts occupy residues 16–25 and 33–42; these read EARTSSDPKR and TTEKNRRNTT. The tract at residues 16–42 is disordered; it reads EARTSSDPKRSNGVSRYTTEKNRRNTT.

This sequence belongs to the bacterial ribosomal protein bL33 family.

The sequence is that of Large ribosomal subunit protein bL33 from Prochlorococcus marinus (strain MIT 9301).